The sequence spans 43 residues: Omega-ctenitoxin-Pr1a (43 aa).

Disulfide bonds link cysteine 2–cysteine 17, cysteine 9–cysteine 22, cysteine 16–cysteine 33, and cysteine 24–cysteine 31. Glycine 43 carries the post-translational modification Glycine amide.

As to expression, expressed by the venom gland.

It is found in the secreted. In terms of biological role, inhibits high-voltage activated calcium channels. Shifts the voltage-dependence for activation towards hyperpolarized membrane potentials for L- (Cav1), P/Q- (Cav2.1/CACNA1A) and R-type (Cav2.3/CACNA1E) calcium currents. Causes immediate agitation and clockwise gyration, followed by the gradual development of general flaccid paralysis when injected intracerebroventricular into mice at dose levels of 5 ug per mouse. This is Omega-ctenitoxin-Pr1a from Phoneutria reidyi (Brazilian Amazonian armed spider).